The primary structure comprises 473 residues: Glutamate--tRNA ligase (473 aa).

The 'HIGH' region motif lies at 11 to 21 (PSPTGFLHIGG). The short motif at 240–244 (KLSKR) is the 'KMSKS' region element. Residue Lys-243 coordinates ATP.

The protein belongs to the class-I aminoacyl-tRNA synthetase family. Glutamate--tRNA ligase type 1 subfamily. As to quaternary structure, monomer.

It is found in the cytoplasm. It carries out the reaction tRNA(Glu) + L-glutamate + ATP = L-glutamyl-tRNA(Glu) + AMP + diphosphate. In terms of biological role, catalyzes the attachment of glutamate to tRNA(Glu) in a two-step reaction: glutamate is first activated by ATP to form Glu-AMP and then transferred to the acceptor end of tRNA(Glu). The chain is Glutamate--tRNA ligase from Rhodopseudomonas palustris (strain BisB5).